We begin with the raw amino-acid sequence, 100 residues long: Large ribosomal subunit protein bL21 (100 aa).

Belongs to the bacterial ribosomal protein bL21 family. Part of the 50S ribosomal subunit. Contacts protein L20.

In terms of biological role, this protein binds to 23S rRNA in the presence of protein L20. This chain is Large ribosomal subunit protein bL21, found in Mycoplasma mycoides subsp. mycoides SC (strain CCUG 32753 / NCTC 10114 / PG1).